The sequence spans 172 residues: Small ribosomal subunit protein uS5 (172 aa).

In terms of domain architecture, S5 DRBM spans 17–80; sequence MREKMIAVNR…EECRRNLVKV (64 aa).

This sequence belongs to the universal ribosomal protein uS5 family. As to quaternary structure, part of the 30S ribosomal subunit. Contacts proteins S4 and S8.

Functionally, with S4 and S12 plays an important role in translational accuracy. Its function is as follows. Located at the back of the 30S subunit body where it stabilizes the conformation of the head with respect to the body. This is Small ribosomal subunit protein uS5 from Paracidovorax citrulli (strain AAC00-1) (Acidovorax citrulli).